Here is a 211-residue protein sequence, read N- to C-terminus: Thiamine-phosphate synthase (211 aa).

4-amino-2-methyl-5-(diphosphooxymethyl)pyrimidine-binding positions include 37–41 (QLRIK) and Asn-69. 2 residues coordinate Mg(2+): Asp-70 and Asp-89. Ser-108 serves as a coordination point for 4-amino-2-methyl-5-(diphosphooxymethyl)pyrimidine. 134-136 (TQT) contributes to the 2-[(2R,5Z)-2-carboxy-4-methylthiazol-5(2H)-ylidene]ethyl phosphate binding site. Lys-137 contacts 4-amino-2-methyl-5-(diphosphooxymethyl)pyrimidine. 2-[(2R,5Z)-2-carboxy-4-methylthiazol-5(2H)-ylidene]ethyl phosphate is bound by residues Gly-166 and 186–187 (VS).

The protein belongs to the thiamine-phosphate synthase family. Requires Mg(2+) as cofactor.

The enzyme catalyses 2-[(2R,5Z)-2-carboxy-4-methylthiazol-5(2H)-ylidene]ethyl phosphate + 4-amino-2-methyl-5-(diphosphooxymethyl)pyrimidine + 2 H(+) = thiamine phosphate + CO2 + diphosphate. The catalysed reaction is 2-(2-carboxy-4-methylthiazol-5-yl)ethyl phosphate + 4-amino-2-methyl-5-(diphosphooxymethyl)pyrimidine + 2 H(+) = thiamine phosphate + CO2 + diphosphate. It catalyses the reaction 4-methyl-5-(2-phosphooxyethyl)-thiazole + 4-amino-2-methyl-5-(diphosphooxymethyl)pyrimidine + H(+) = thiamine phosphate + diphosphate. It participates in cofactor biosynthesis; thiamine diphosphate biosynthesis; thiamine phosphate from 4-amino-2-methyl-5-diphosphomethylpyrimidine and 4-methyl-5-(2-phosphoethyl)-thiazole: step 1/1. Functionally, condenses 4-methyl-5-(beta-hydroxyethyl)thiazole monophosphate (THZ-P) and 2-methyl-4-amino-5-hydroxymethyl pyrimidine pyrophosphate (HMP-PP) to form thiamine monophosphate (TMP). This Salmonella choleraesuis (strain SC-B67) protein is Thiamine-phosphate synthase.